We begin with the raw amino-acid sequence, 591 residues long: DEAD-box ATP-dependent RNA helicase 30 (591 aa).

The disordered stretch occupies residues 1–109; that stretch reads MSSYDRRFAD…GRGGSSKREL (109 aa). Gly residues predominate over residues 72-103; that stretch reads FSVGRGGGRGGYGQYGDRNGGGNWGGGGGRGG. The Q motif motif lies at 165–193; the sequence is KMFQDANFPDNILEAIAKLGFTEPTPIQA. In terms of domain architecture, Helicase ATP-binding spans 196–371; that stretch reads WPMALKGRDL…RQFLRDPYKA (176 aa). 209 to 216 provides a ligand contact to ATP; sequence AETGSGKT. A DEAD box motif is present at residues 319–322; it reads DEAD. A Helicase C-terminal domain is found at 399-544; sequence RLLTLLKQLM…VVPPTLSALV (146 aa). Residues 547-591 are disordered; sequence SGSGYGGSGGGRNFRPRGGGRGGGFGDKRSRSTSNFVPHGGKRTW. Over residues 549–571 the composition is skewed to gly residues; the sequence is SGYGGSGGGRNFRPRGGGRGGGF.

It belongs to the DEAD box helicase family. DDX5/DBP2 subfamily.

The protein localises to the nucleus. It carries out the reaction ATP + H2O = ADP + phosphate + H(+). In terms of biological role, ATP-dependent RNA helicase involved nonsense-mediated mRNA decay and ribosome biogenesis through rRNA processing. The protein is DEAD-box ATP-dependent RNA helicase 30 (RH30) of Arabidopsis thaliana (Mouse-ear cress).